We begin with the raw amino-acid sequence, 215 residues long: Large ribosomal subunit protein uL4 (215 aa).

Residues 46 to 72 are disordered; that stretch reads TAKSKNRAEVSGGGRKPWAQKGGGRAR. Residues 56 to 71 are compositionally biased toward gly residues; the sequence is SGGGRKPWAQKGGGRA.

Belongs to the universal ribosomal protein uL4 family. In terms of assembly, part of the 50S ribosomal subunit.

One of the primary rRNA binding proteins, this protein initially binds near the 5'-end of the 23S rRNA. It is important during the early stages of 50S assembly. It makes multiple contacts with different domains of the 23S rRNA in the assembled 50S subunit and ribosome. In terms of biological role, forms part of the polypeptide exit tunnel. The sequence is that of Large ribosomal subunit protein uL4 from Helicobacter pylori (strain G27).